The primary structure comprises 337 residues: 2-ketoarginine methyltransferase (337 aa).

The protein belongs to the 2-ketoarginine methyltransferase family.

The catalysed reaction is 5-guanidino-2-oxopentanoate + S-adenosyl-L-methionine = (3R)-5-guanidino-3-methyl-2-oxopentanoate + S-adenosyl-L-homocysteine + H(+). It functions in the pathway antibiotic biosynthesis. S-adenosyl-L-methionine-dependent methyltransferase involved in the formation of the rare amino acid 3-methylarginine (MeArg), which is incorporated into the peptidyl nucleoside antibiotic arginomycin. Transfers the methyl group from S-adenosyl-L-methionine into 5-guanidino-2-oxopentanoate acid to yield 5-guanidino-3-methyl-2-oxopentanoate, a precursor of MeArg. The sequence is that of 2-ketoarginine methyltransferase from Streptomyces arginensis.